The following is a 365-amino-acid chain: MSLARLRVHHLRNLESVDIEPSSRVNLIYGLNGSGKTSLLEAINVLALGRSFRSHKHKPLISHQQLAFTIFGRVLADDAAEIPIGIQRNQQGEVMLKANGANVGSIADLAIFLPVQVINSDTFLLLEGSPKVRRQFMDWLVFHVEHQFYPQWKSLQRCLKHRNSLLRRDRIDPFELSTWDQELVQLTEQIHCFREQCMALFVPVFEQLLQEFVVLEGLELHYQRGWDKHKDYAQVLQDSFERDKRLGVTHAGSHRAELRITLNGQDAAEILSRGQQKLLVCALKIAQGLVFSQVTGRKCIYLVDDLPAELDEQHRQRLVDWLYRMDTQVFITGVERQALLAGWLDKPEITPKMFHVEHGRVSCPA.

Gly-30–Thr-37 is a binding site for ATP.

The protein belongs to the RecF family.

The protein localises to the cytoplasm. In terms of biological role, the RecF protein is involved in DNA metabolism; it is required for DNA replication and normal SOS inducibility. RecF binds preferentially to single-stranded, linear DNA. It also seems to bind ATP. The polypeptide is DNA replication and repair protein RecF (Cellvibrio japonicus (strain Ueda107) (Pseudomonas fluorescens subsp. cellulosa)).